The primary structure comprises 449 residues: Tubulin alpha chain (449 aa).

The short motif at 1–4 is the MREC motif element; it reads MREC. A GTP-binding site is contributed by glutamine 11. Lysine 40 carries the N6-acetyllysine modification. 7 residues coordinate GTP: glutamate 71, serine 140, glycine 144, threonine 145, threonine 179, asparagine 206, and asparagine 228. Glutamate 71 serves as a coordination point for Mg(2+). Residue glutamate 254 is part of the active site. A 5-glutamyl polyglutamate modification is found at glutamate 443.

The protein belongs to the tubulin family. Dimer of alpha and beta chains. A typical microtubule is a hollow water-filled tube with an outer diameter of 25 nm and an inner diameter of 15 nM. Alpha-beta heterodimers associate head-to-tail to form protofilaments running lengthwise along the microtubule wall with the beta-tubulin subunit facing the microtubule plus end conferring a structural polarity. Microtubules usually have 13 protofilaments but different protofilament numbers can be found in some organisms and specialized cells. The cofactor is Mg(2+). In terms of processing, some glutamate residues at the C-terminus are polyglycylated, resulting in polyglycine chains on the gamma-carboxyl group. Glycylation is mainly limited to tubulin incorporated into axonemes (cilia and flagella) whereas glutamylation is prevalent in neuronal cells, centrioles, axonemes, and the mitotic spindle. Both modifications can coexist on the same protein on adjacent residues, and lowering polyglycylation levels increases polyglutamylation, and reciprocally. The precise function of polyglycylation is still unclear. Some glutamate residues at the C-terminus are polyglutamylated, resulting in polyglutamate chains on the gamma-carboxyl group. Polyglutamylation plays a key role in microtubule severing by spastin (SPAST). SPAST preferentially recognizes and acts on microtubules decorated with short polyglutamate tails: severing activity by SPAST increases as the number of glutamates per tubulin rises from one to eight, but decreases beyond this glutamylation threshold. Post-translationally, acetylation of alpha chains at Lys-40 is located inside the microtubule lumen. This modification has been correlated with increased microtubule stability, intracellular transport and ciliary assembly. In terms of processing, undergoes a tyrosination/detyrosination cycle, the cyclic removal and re-addition of a C-terminal tyrosine residue by the enzymes tubulin tyrosine carboxypeptidase (MATCAP1, VASH1 or VASH2) and tubulin tyrosine ligase (TTL), respectively. Tyrosination promotes microtubule interaction with CAP-Gly microtubule plus-end tracking proteins. Tyrosinated tubulins regulate the initiation of dynein-driven motility. Post-translationally, detyrosination is involved in metaphase plate congression by guiding chromosomes during mitosis. Detyrosination increases microtubules-dependent mechanotransduction in dystrophic cardiac and skeletal muscle. In cardiomyocytes, detyrosinated microtubules are required to resist to contractile compression during contraction.

The protein localises to the cytoplasm. It is found in the cytoskeleton. The catalysed reaction is GTP + H2O = GDP + phosphate + H(+). Tubulin is the major constituent of microtubules, a cylinder consisting of laterally associated linear protofilaments composed of alpha- and beta-tubulin heterodimers. Microtubules grow by the addition of GTP-tubulin dimers to the microtubule end, where a stabilizing cap forms. Below the cap, tubulin dimers are in GDP-bound state, owing to GTPase activity of alpha-tubulin. The chain is Tubulin alpha chain (tuba) from Xenopus tropicalis (Western clawed frog).